The following is a 702-amino-acid chain: Polyribonucleotide nucleotidyltransferase (702 aa).

Mg(2+)-binding residues include Asp485 and Asp491. Positions 552–611 (PKTSTLQIDPEKIRDVIGAGGKVINKIIADTGVKIDIKEDGLVYVSSAESEGVKEAVKII) constitute a KH domain. The region spanning 621–689 (GEIYLGKVTK…SQGRINLSRK (69 aa)) is the S1 motif domain.

Belongs to the polyribonucleotide nucleotidyltransferase family. Requires Mg(2+) as cofactor.

It is found in the cytoplasm. The enzyme catalyses RNA(n+1) + phosphate = RNA(n) + a ribonucleoside 5'-diphosphate. Involved in mRNA degradation. Catalyzes the phosphorolysis of single-stranded polyribonucleotides processively in the 3'- to 5'-direction. This Clostridium perfringens (strain SM101 / Type A) protein is Polyribonucleotide nucleotidyltransferase.